The following is a 435-amino-acid chain: Glutamate-1-semialdehyde 2,1-aminomutase (435 aa).

K269 is modified (N6-(pyridoxal phosphate)lysine).

This sequence belongs to the class-III pyridoxal-phosphate-dependent aminotransferase family. HemL subfamily. In terms of assembly, homodimer. It depends on pyridoxal 5'-phosphate as a cofactor.

It localises to the cytoplasm. It carries out the reaction (S)-4-amino-5-oxopentanoate = 5-aminolevulinate. The protein operates within porphyrin-containing compound metabolism; protoporphyrin-IX biosynthesis; 5-aminolevulinate from L-glutamyl-tRNA(Glu): step 2/2. The chain is Glutamate-1-semialdehyde 2,1-aminomutase from Gemmatimonas aurantiaca (strain DSM 14586 / JCM 11422 / NBRC 100505 / T-27).